Reading from the N-terminus, the 212-residue chain is MVGGGGVKFIEMDIRDKEAYELAKEWFDEVVVSIKFNEEVDKEKLREARKEYGKVAILLSNPKPSLVRDTVQKFKSYLIYVESNDLRVIRYSIEKGVDAIISPWVNRKDPGIDHVLAKLMVKKNVALGFSLRPLLYSNPYERANLLRFMMKAWKLVEKYKVRRFLTSSAQEKWDVRYPRDLISLGVVIGMEIPQAKASISMYPEIILKRLKY.

The protein belongs to the eukaryotic/archaeal RNase P protein component 3 family. As to quaternary structure, consists of a catalytic RNA component and at least 5 protein subunits. Forms a heterotetrameric subcomplex with Rnp2. Reconstituted enzyme missing individual protein subunits is suboptimally active, showing each subunit contributes to optimization of activity.

The protein localises to the cytoplasm. The catalysed reaction is Endonucleolytic cleavage of RNA, removing 5'-extranucleotides from tRNA precursor.. In terms of biological role, part of ribonuclease P, a protein complex that generates mature tRNA molecules by cleaving their 5'-ends. Not absolutely essential for activity in vitro, however it strongly stimulates activity. Binds RNase P RNA. This is Ribonuclease P protein component 3 from Pyrococcus horikoshii (strain ATCC 700860 / DSM 12428 / JCM 9974 / NBRC 100139 / OT-3).